The sequence spans 196 residues: ATP-dependent Clp protease proteolytic subunit (196 aa).

The Nucleophile role is filled by Ser-96. The active site involves His-121.

This sequence belongs to the peptidase S14 family. As to quaternary structure, fourteen ClpP subunits assemble into 2 heptameric rings which stack back to back to give a disk-like structure with a central cavity, resembling the structure of eukaryotic proteasomes.

Its subcellular location is the cytoplasm. It catalyses the reaction Hydrolysis of proteins to small peptides in the presence of ATP and magnesium. alpha-casein is the usual test substrate. In the absence of ATP, only oligopeptides shorter than five residues are hydrolyzed (such as succinyl-Leu-Tyr-|-NHMec, and Leu-Tyr-Leu-|-Tyr-Trp, in which cleavage of the -Tyr-|-Leu- and -Tyr-|-Trp bonds also occurs).. Cleaves peptides in various proteins in a process that requires ATP hydrolysis. Has a chymotrypsin-like activity. Plays a major role in the degradation of misfolded proteins. This chain is ATP-dependent Clp protease proteolytic subunit, found in Streptococcus salivarius.